We begin with the raw amino-acid sequence, 45 residues long: Photosystem II reaction center protein K (45 aa).

Positions 1–8 (MDVNFLLS) are excised as a propeptide. A helical membrane pass occupies residues 20-40 (IVDVMPAIPVFFLLLAFVWQA).

Belongs to the PsbK family. In terms of assembly, PSII is composed of 1 copy each of membrane proteins PsbA, PsbB, PsbC, PsbD, PsbE, PsbF, PsbH, PsbI, PsbJ, PsbK, PsbL, PsbM, PsbT, PsbX, PsbY, PsbZ, Psb30/Ycf12, at least 3 peripheral proteins of the oxygen-evolving complex and a large number of cofactors. It forms dimeric complexes.

The protein localises to the plastid. It localises to the chloroplast thylakoid membrane. Its function is as follows. One of the components of the core complex of photosystem II (PSII). PSII is a light-driven water:plastoquinone oxidoreductase that uses light energy to abstract electrons from H(2)O, generating O(2) and a proton gradient subsequently used for ATP formation. It consists of a core antenna complex that captures photons, and an electron transfer chain that converts photonic excitation into a charge separation. The protein is Photosystem II reaction center protein K of Emiliania huxleyi (Coccolithophore).